Here is a 280-residue protein sequence, read N- to C-terminus: MKFGKSLSSQIVEMQPEWRDNFLSYKDLKKRLNLISGGAAGERASKRRRVGGATAVTVTAAAAGGMTLEQAGFVGLLDAELDKFNFFFLEKEEEYVIKQKELRERKMASAEEVMRVRKEIVDLHGEMVLLENYSALNYTGLVKILKKYDKRTGSMIRLPFVQKVLQQPFFTTDLLYKLVKECEEMLDQLMPTNEHSVASEDGKDDSEGEEKGSKPSSSSSANGGAVPGEAEAEDERSTDMKSTVTAALRALREIRSGSSTVSVFSLPPLHGSNGQDEPGR.

The 162-residue stretch at 1 to 162 (MKFGKSLSSQ…GSMIRLPFVQ (162 aa)) folds into the SPX domain. Disordered regions lie at residues 191 to 244 (PTNE…KSTV) and 257 to 280 (GSST…EPGR).

In terms of assembly, interacts (via SPX domain) with PHR2 (via C-terminus). Interacts with RLI1 in the nucleus to prevents its positive regulation of leaf inclination during phosphate (Pi) starvation. In terms of tissue distribution, predominantly expressed in roots, leaves and seeds. Localized in leaves lamina joints.

The protein resides in the nucleus. Its function is as follows. Inhibits PHR2 DNA-binding activity via a phosphate (Pi)-dependent protein interaction. Together with SPX1, plays a negative role in the regulation of leaf inclination by preventing RLI1 transcription factor activity in Pi depleted conditions. This chain is SPX domain-containing protein 2, found in Oryza sativa subsp. japonica (Rice).